The following is a 472-amino-acid chain: Putative ankyrin repeat protein L675 (472 aa).

ANK repeat units lie at residues Tyr125 to Leu156, Asp187 to Ile216, Tyr265 to Ile295, His297 to Tyr323, Asn325 to Ser351, Asn352 to Ala381, Asn382 to Ile411, and Asp413 to Asp440.

The polypeptide is Putative ankyrin repeat protein L675 (Acanthamoeba polyphaga (Amoeba)).